We begin with the raw amino-acid sequence, 120 residues long: Large ribosomal subunit protein bL19 (120 aa).

Belongs to the bacterial ribosomal protein bL19 family.

Its function is as follows. This protein is located at the 30S-50S ribosomal subunit interface and may play a role in the structure and function of the aminoacyl-tRNA binding site. The polypeptide is Large ribosomal subunit protein bL19 (Crocosphaera subtropica (strain ATCC 51142 / BH68) (Cyanothece sp. (strain ATCC 51142))).